A 280-amino-acid polypeptide reads, in one-letter code: Protease HtpX (280 aa).

2 consecutive transmembrane segments (helical) span residues 7–26 (TFIL…GLLG) and 30–49 (GMLV…YWYS). His-129 is a binding site for Zn(2+). Glu-130 is an active-site residue. His-133 serves as a coordination point for Zn(2+). The next 2 membrane-spanning stretches (helical) occupy residues 146–166 (ATIA…SMFG) and 178–198 (VVGM…QMAI). Glu-203 lines the Zn(2+) pocket.

This sequence belongs to the peptidase M48B family. Zn(2+) is required as a cofactor.

It is found in the cell inner membrane. This chain is Protease HtpX, found in Legionella pneumophila (strain Corby).